The sequence spans 152 residues: Transcriptional regulator MraZ (152 aa).

SpoVT-AbrB domains are found at residues 5 to 52 (ASAI…PLKE) and 81 to 124 (ATEC…SDAE).

Belongs to the MraZ family. As to quaternary structure, forms oligomers.

It localises to the cytoplasm. It is found in the nucleoid. In Pasteurella multocida (strain Pm70), this protein is Transcriptional regulator MraZ.